The sequence spans 1822 residues: Signal-induced proliferation-associated 1-like protein 1 (1822 aa).

Disordered stretches follow at residues 1 to 30 (MTSL…PKVH) and 47 to 125 (GSSV…VSLN). Residues 84-94 (PPRKENVKESS) show a composition bias toward basic and acidic residues. Positions 95–125 (RSSQEIETSSCLESLSSKGSPVSQGSSVSLN) are enriched in low complexity. 6 positions are modified to phosphoserine: Ser162, Ser187, Ser193, Ser208, Ser255, and Ser288. Residues 277–297 (EREKPLKRRSKSETGDSSIFR) form a disordered region. The Rap-GAP domain occupies 638 to 855 (FMKLDEQGLN…RTRQEYLKDL (218 aa)). The PDZ domain maps to 992 to 1068 (EMTLRRNGLG…VKVVIIPPHD (77 aa)). Phosphoserine is present on residues Ser1117, Ser1126, Ser1155, Ser1166, Ser1188, Ser1209, and Ser1220. The tract at residues 1134–1165 (AGKGDGKMPLPERAANIPRSISSDGRPLERRL) is disordered. Positions 1183–1252 (SQCRNSPSNL…WQRSEDSLAD (70 aa)) are disordered. Positions 1188 to 1198 (SPSNLSSSSET) are enriched in low complexity. The segment covering 1225–1244 (DRQNTQSDIGGSGKSTPSWQ) has biased composition (polar residues). A phosphoserine mark is found at Ser1273 and Ser1288. A disordered region spans residues 1286 to 1324 (HLSPNKQGHSDSHYSSHSSSNTLSSNASSAHSDEKWYDG). Low complexity predominate over residues 1300-1315 (SSHSSSNTLSSNASSA). Ser1344 is modified (phosphoserine; by PLK2). At Thr1348 the chain carries Phosphothreonine; by PLK2. Residues 1358-1367 (TASLGASTSS) are compositionally biased toward low complexity. The tract at residues 1358 to 1382 (TASLGASTSSPRSGPGKEKVAPLWH) is disordered. At Ser1367 the chain carries Phosphoserine; by CDK5. At Ser1384 the chain carries Phosphoserine. Basic and acidic residues predominate over residues 1395-1407 (LETEGHGMDRKTE). Residues 1395 to 1493 (LETEGHGMDR…SSSGPRTFYP (99 aa)) are disordered. Phosphoserine is present on residues Ser1408, Ser1409, Ser1430, Ser1449, and Ser1451. A compositionally biased stretch (polar residues) spans 1417–1436 (KSQGGSSPLTRENSTFSIND). Low complexity-rich tracts occupy residues 1437–1451 (ATSH…HSAS) and 1471–1486 (SSQL…SSSS). Residues Ser1546 and Ser1567 each carry the phosphoserine modification. Residues 1567-1595 (SPTPESQKNFKFHGLSSPQSPFPSTPTSR) are disordered. Thr1569 carries the post-translational modification Phosphothreonine. 5 positions are modified to phosphoserine: Ser1572, Ser1583, Ser1586, Ser1603, and Ser1606. At Arg1619 the chain carries Asymmetric dimethylarginine. Phosphoserine is present on residues Ser1621, Ser1665, Ser1668, Ser1726, Ser1729, Ser1746, Ser1747, and Ser1752. The stretch at 1753-1813 (PTLASKVDQL…ASDKLKKFTE (61 aa)) forms a coiled coil.

Interacts (via PDZ domain) with EPHA4 (via PDZ motif); controls neuronal morphology through regulation of the RAP1 (RAP1A or RAP1B) and RAP2 (RAP2A, RAP2B or RAP2C) GTPases. Interacts with DLG4, PDLIM5, PDLIM7 and LZTS3. Interacts with the actin cytoskeleton. Post-translationally, ubiquitinated and degraded by the SCF(BTRC) following phosphorylation by PLK2. Phosphorylated at Ser-1367 by CDK5, creating a docking site for the POLO box domains of PLK2. Subsequently, PLK2 binds and phosphorylates SIPA1L1, leading to ubiquitination and degradation by the proteasome. As to expression, detected in brain (at protein level).

It is found in the cytoplasm. It localises to the cytoskeleton. Its subcellular location is the postsynaptic density. The protein resides in the synapse. The protein localises to the synaptosome. Its function is as follows. Stimulates the GTPase activity of RAP2A. Promotes reorganization of the actin cytoskeleton and recruits DLG4 to F-actin. Contributes to the regulation of dendritic spine morphogenesis. The polypeptide is Signal-induced proliferation-associated 1-like protein 1 (Sipa1l1) (Rattus norvegicus (Rat)).